The chain runs to 287 residues: Elongation factor Ts (287 aa).

Positions 80–83 (TDFL) are involved in Mg(2+) ion dislocation from EF-Tu.

The protein belongs to the EF-Ts family.

The protein resides in the cytoplasm. Associates with the EF-Tu.GDP complex and induces the exchange of GDP to GTP. It remains bound to the aminoacyl-tRNA.EF-Tu.GTP complex up to the GTP hydrolysis stage on the ribosome. In Ectopseudomonas mendocina (strain ymp) (Pseudomonas mendocina), this protein is Elongation factor Ts.